Consider the following 24-residue polypeptide: AQTPVKVTVTGAAGQIGYALLFRI.

An NAD(+)-binding site is contributed by 11 to 17; sequence GAAGQIG.

The protein belongs to the LDH/MDH superfamily. MDH type 2 family.

It carries out the reaction (S)-malate + NAD(+) = oxaloacetate + NADH + H(+). Functionally, catalyzes the reversible oxidation of malate to oxaloacetate. The protein is Malate dehydrogenase (mdh) of Planomonospora venezuelensis.